The chain runs to 305 residues: Ribosomal RNA small subunit methyltransferase H (305 aa).

S-adenosyl-L-methionine contacts are provided by residues 46-48 (GGH), aspartate 65, phenylalanine 92, aspartate 108, and histidine 115.

It belongs to the methyltransferase superfamily. RsmH family.

Its subcellular location is the cytoplasm. The enzyme catalyses cytidine(1402) in 16S rRNA + S-adenosyl-L-methionine = N(4)-methylcytidine(1402) in 16S rRNA + S-adenosyl-L-homocysteine + H(+). Functionally, specifically methylates the N4 position of cytidine in position 1402 (C1402) of 16S rRNA. This Trichormus variabilis (strain ATCC 29413 / PCC 7937) (Anabaena variabilis) protein is Ribosomal RNA small subunit methyltransferase H.